A 330-amino-acid chain; its full sequence is Glycerol-3-phosphate dehydrogenase [NAD(P)+] (330 aa).

NADPH contacts are provided by tryptophan 13, arginine 33, and lysine 103. Positions 103, 131, and 133 each coordinate sn-glycerol 3-phosphate. Alanine 135 is a binding site for NADPH. Sn-glycerol 3-phosphate is bound by residues lysine 186, aspartate 239, serine 249, arginine 250, and asparagine 251. Lysine 186 acts as the Proton acceptor in catalysis. Arginine 250 serves as a coordination point for NADPH. Residues valine 274 and glutamate 276 each coordinate NADPH.

The protein belongs to the NAD-dependent glycerol-3-phosphate dehydrogenase family.

It localises to the cytoplasm. It catalyses the reaction sn-glycerol 3-phosphate + NAD(+) = dihydroxyacetone phosphate + NADH + H(+). The catalysed reaction is sn-glycerol 3-phosphate + NADP(+) = dihydroxyacetone phosphate + NADPH + H(+). It participates in membrane lipid metabolism; glycerophospholipid metabolism. Its function is as follows. Catalyzes the reduction of the glycolytic intermediate dihydroxyacetone phosphate (DHAP) to sn-glycerol 3-phosphate (G3P), the key precursor for phospholipid synthesis. The chain is Glycerol-3-phosphate dehydrogenase [NAD(P)+] from Erythrobacter litoralis (strain HTCC2594).